A 489-amino-acid chain; its full sequence is Cryptochrome DASH (489 aa).

The 135-residue stretch at 6–140 (PTVLVWFRND…EAKGYWGSTL (135 aa)) folds into the Photolyase/cryptochrome alpha/beta domain.

Belongs to the DNA photolyase class-1 family. It depends on FAD as a cofactor. The cofactor is (6R)-5,10-methylene-5,6,7,8-tetrahydrofolate.

Functionally, may have a photoreceptor function. Binds DNA; represses transcription of at least 8 genes, including slr0364 and slr1866. Does not encode a DNA photolyase function. Its disruption does not affect circadian rhythm. This is Cryptochrome DASH (cry) from Synechocystis sp. (strain ATCC 27184 / PCC 6803 / Kazusa).